A 442-amino-acid chain; its full sequence is SPRY domain-containing protein 3 (442 aa).

Positions 17–204 (DLNLHYRFLN…VRLHLNAELG (188 aa)) constitute a B30.2/SPRY domain. The segment at 371–394 (EGEEEEEEEEEEEDGEEIEPEHEG) is disordered. Residues 372–390 (GEEEEEEEEEEEDGEEIEP) show a composition bias toward acidic residues.

This Homo sapiens (Human) protein is SPRY domain-containing protein 3 (SPRYD3).